A 386-amino-acid polypeptide reads, in one-letter code: Peroxisomal membrane protein PEX13 (386 aa).

Residues 1-76 (MSSTAVPRPK…SSGTYGESNT (76 aa)) are disordered. Topologically, residues 1–263 (MSSTAVPRPK…KATRRKISWK (263 aa)) are lumenal. The span at 23-39 (RNAQSLSAMMTSNQQDS) shows a compositional bias: polar residues. Residues 44–55 (ESNNSNSASESA) are compositionally biased toward low complexity. A compositionally biased stretch (polar residues) spans 65-76 (LNSSGTYGESNT). A helical transmembrane segment spans residues 264-280 (PLLFFLMAVFGFPYLLN). Topologically, residues 281 to 386 (KFITKLQTSG…EHVDDETRTH (106 aa)) are cytoplasmic. Residues 306–372 (SKLEFARALY…PYNYIEIIKR (67 aa)) enclose the SH3 domain.

Belongs to the peroxin-13 family. Interacts (via SH3 domain) with PEX14 (via SH3-binding motif); forming the PEX13-PEX14 docking complex.

The protein localises to the peroxisome membrane. Its function is as follows. Component of the PEX13-PEX14 docking complex, a translocon channel that specifically mediates the import of peroxisomal cargo proteins bound to PEX5 or PEX21 receptors. The PEX13-PEX14 docking complex forms a large import pore which can be opened to a diameter of about 9 nm. Mechanistically, PEX5 (or PEX21) receptor along with cargo proteins associates with the PEX14 subunit of the PEX13-PEX14 docking complex in the cytosol, leading to the insertion of the receptor into the organelle membrane with the concomitant translocation of the cargo into the peroxisome matrix. The polypeptide is Peroxisomal membrane protein PEX13 (Saccharomyces cerevisiae (strain ATCC 204508 / S288c) (Baker's yeast)).